Here is a 215-residue protein sequence, read N- to C-terminus: Outer membrane protein assembly factor BamC homolog (215 aa).

Residues 1 to 16 (MKKIILNLVTAIILAG) form the signal peptide. The N-palmitoyl cysteine moiety is linked to residue Cys-17. The S-diacylglycerol cysteine moiety is linked to residue Cys-17.

It belongs to the BamC family.

Its subcellular location is the cell outer membrane. The protein is Outer membrane protein assembly factor BamC homolog of Haemophilus influenzae (strain ATCC 51907 / DSM 11121 / KW20 / Rd).